Here is a 238-residue protein sequence, read N- to C-terminus: DNA repair protein RecO (238 aa).

Belongs to the RecO family.

Involved in DNA repair and RecF pathway recombination. The polypeptide is DNA repair protein RecO (Cereibacter sphaeroides (strain ATCC 17023 / DSM 158 / JCM 6121 / CCUG 31486 / LMG 2827 / NBRC 12203 / NCIMB 8253 / ATH 2.4.1.) (Rhodobacter sphaeroides)).